The chain runs to 500 residues: Polyamine oxidase 1 (500 aa).

Residues methionine 1 to alanine 28 form the signal peptide. FAD contacts are provided by residues methionine 42–serine 43, glutamate 63, arginine 71, and asparagine 87–tryptophan 88. Residue glutamate 90 coordinates substrate. Asparagine 105 carries N-linked (GlcNAc...) asparagine glycosylation. Glutamate 198 contributes to the substrate binding site. FAD-binding residues include valine 265, tyrosine 427, and glutamate 458. Substrate is bound at residue glycine 466. An FAD-binding site is contributed by tyrosine 467 to valine 468. An intrachain disulfide couples cysteine 485 to cysteine 491.

This sequence belongs to the flavin monoamine oxidase family. As to quaternary structure, monomer. The cofactor is FAD.

The protein localises to the secreted. The protein resides in the extracellular space. Its subcellular location is the apoplast. It localises to the cell wall. The enzyme catalyses spermidine + O2 + H2O = 4-aminobutanal + propane-1,3-diamine + H2O2. It carries out the reaction N(8)-acetylspermidine + O2 + H2O = 4-acetamidobutanal + propane-1,3-diamine + H2O2. The catalysed reaction is spermine + O2 + H2O = N-(3-aminopropyl)-4-aminobutanal + propane-1,3-diamine + H2O2. It catalyses the reaction N(1)-acetylspermine + O2 + H2O = N-(3-acetamidopropyl)-4-aminobutanal + propane-1,3-diamine + H2O2. The protein operates within amine and polyamine degradation; spermine degradation. Its function is as follows. Flavoenzyme involved in polyamine back-conversion. Catalyzes the oxidation of the secondary amino group of polyamines, such as spermine, spermidine and their acetyl derivatives. Plays an important role in the regulation of polyamine intracellular concentration. The protein is Polyamine oxidase 1 of Zea mays (Maize).